The primary structure comprises 523 residues: 2-isopropylmalate synthase (523 aa).

One can recognise a Pyruvate carboxyltransferase domain in the interval 5–267; it reads VIIFDTTLRD…HTAINHQEIW (263 aa). 4 residues coordinate Mn(2+): D14, H202, H204, and N238. Positions 392–523 are regulatory domain; that stretch reads RLDYFSVQSS…QHNENNKETV (132 aa).

Belongs to the alpha-IPM synthase/homocitrate synthase family. LeuA type 1 subfamily. Homodimer. Requires Mn(2+) as cofactor.

Its subcellular location is the cytoplasm. The catalysed reaction is 3-methyl-2-oxobutanoate + acetyl-CoA + H2O = (2S)-2-isopropylmalate + CoA + H(+). It functions in the pathway amino-acid biosynthesis; L-leucine biosynthesis; L-leucine from 3-methyl-2-oxobutanoate: step 1/4. Functionally, catalyzes the condensation of the acetyl group of acetyl-CoA with 3-methyl-2-oxobutanoate (2-ketoisovalerate) to form 3-carboxy-3-hydroxy-4-methylpentanoate (2-isopropylmalate). The protein is 2-isopropylmalate synthase of Shigella dysenteriae serotype 1 (strain Sd197).